Here is a 312-residue protein sequence, read N- to C-terminus: 2-phospho-L-lactate transferase (312 aa).

Residues Asp-50 and Lys-89 each contribute to the 7,8-didemethyl-8-hydroxy-5-deazariboflavin site.

This sequence belongs to the CofD family. In terms of assembly, homodimer. Mg(2+) serves as cofactor.

The catalysed reaction is (2S)-lactyl-2-diphospho-5'-guanosine + 7,8-didemethyl-8-hydroxy-5-deazariboflavin = oxidized coenzyme F420-0 + GMP + H(+). It functions in the pathway cofactor biosynthesis; coenzyme F420 biosynthesis. Its function is as follows. Catalyzes the transfer of the 2-phospholactate moiety from (2S)-lactyl-2-diphospho-5'-guanosine to 7,8-didemethyl-8-hydroxy-5-deazariboflavin (FO) with the formation of oxidized coenzyme F420-0 and GMP. This Methanococcus vannielii (strain ATCC 35089 / DSM 1224 / JCM 13029 / OCM 148 / SB) protein is 2-phospho-L-lactate transferase.